A 478-amino-acid chain; its full sequence is Probable cytosolic Fe-S cluster assembly factor AGAP009023 (478 aa).

Residues cysteine 23, cysteine 69, cysteine 72, cysteine 75, cysteine 189, cysteine 245, cysteine 396, and cysteine 400 each contribute to the [4Fe-4S] cluster site.

Belongs to the NARF family.

Its function is as follows. Component of the cytosolic iron-sulfur (Fe/S) protein assembly machinery. Required for maturation of extramitochondrial Fe/S proteins. This is Probable cytosolic Fe-S cluster assembly factor AGAP009023 from Anopheles gambiae (African malaria mosquito).